We begin with the raw amino-acid sequence, 121 residues long: Large ribosomal subunit protein bL12 (121 aa).

Belongs to the bacterial ribosomal protein bL12 family. Homodimer. Part of the ribosomal stalk of the 50S ribosomal subunit. Forms a multimeric L10(L12)X complex, where L10 forms an elongated spine to which 2 to 4 L12 dimers bind in a sequential fashion. Binds GTP-bound translation factors.

Its function is as follows. Forms part of the ribosomal stalk which helps the ribosome interact with GTP-bound translation factors. Is thus essential for accurate translation. The sequence is that of Large ribosomal subunit protein bL12 from Oenococcus oeni (strain ATCC BAA-331 / PSU-1).